Consider the following 254-residue polypeptide: Flavin-dependent thymidylate synthase (254 aa).

The ThyX domain occupies 7–237 (LRVQLIAKTE…PAVFADFEIT (231 aa)). Residues 92–95 (ELIR), 103–107 (QLSQR), and His176 contribute to the dUMP site. Residues 95-97 (RHR) and Gln103 contribute to the FAD site. The ThyX motif signature appears at 95–105 (RHRHFSYSQLS). FAD is bound by residues 192–194 (NYR) and His198. Arg203 is a dUMP binding site. Arg203 functions as the Involved in ionization of N3 of dUMP, leading to its activation in the catalytic mechanism.

The protein belongs to the thymidylate synthase ThyX family. Homotetramer. The cofactor is FAD.

It catalyses the reaction dUMP + (6R)-5,10-methylene-5,6,7,8-tetrahydrofolate + NADPH + H(+) = dTMP + (6S)-5,6,7,8-tetrahydrofolate + NADP(+). It functions in the pathway pyrimidine metabolism; dTTP biosynthesis. In terms of biological role, catalyzes the reductive methylation of 2'-deoxyuridine-5'-monophosphate (dUMP) to 2'-deoxythymidine-5'-monophosphate (dTMP) while utilizing 5,10-methylenetetrahydrofolate (mTHF) as the methyl donor, and NADPH and FADH(2) as the reductant. This chain is Flavin-dependent thymidylate synthase, found in Mycobacterium leprae (strain Br4923).